We begin with the raw amino-acid sequence, 366 residues long: NADH-quinone oxidoreductase subunit D (366 aa).

Belongs to the complex I 49 kDa subunit family. As to quaternary structure, NDH-1 is composed of 14 different subunits. Subunits NuoB, C, D, E, F, and G constitute the peripheral sector of the complex.

The protein localises to the cell membrane. The enzyme catalyses a quinone + NADH + 5 H(+)(in) = a quinol + NAD(+) + 4 H(+)(out). In terms of biological role, NDH-1 shuttles electrons from NADH, via FMN and iron-sulfur (Fe-S) centers, to quinones in the respiratory chain. The immediate electron acceptor for the enzyme in this species is believed to be a menaquinone. Couples the redox reaction to proton translocation (for every two electrons transferred, four hydrogen ions are translocated across the cytoplasmic membrane), and thus conserves the redox energy in a proton gradient. The sequence is that of NADH-quinone oxidoreductase subunit D from Bacillus mycoides (strain KBAB4) (Bacillus weihenstephanensis).